The primary structure comprises 322 residues: Phosphatidylglycerol--prolipoprotein diacylglyceryl transferase (322 aa).

Transmembrane regions (helical) follow at residues 23 to 43 (VYPI…AFFW), 53 to 73 (FFAL…LWFV), and 97 to 117 (GLSI…YIYF). Position 143 (Arg-143) interacts with a 1,2-diacyl-sn-glycero-3-phospho-(1'-sn-glycerol). The next 2 membrane-spanning stretches (helical) occupy residues 191-211 (PLFL…VWII) and 250-270 (LAAM…EIWA).

It belongs to the Lgt family.

The protein resides in the cell membrane. The catalysed reaction is L-cysteinyl-[prolipoprotein] + a 1,2-diacyl-sn-glycero-3-phospho-(1'-sn-glycerol) = an S-1,2-diacyl-sn-glyceryl-L-cysteinyl-[prolipoprotein] + sn-glycerol 1-phosphate + H(+). It functions in the pathway protein modification; lipoprotein biosynthesis (diacylglyceryl transfer). Catalyzes the transfer of the diacylglyceryl group from phosphatidylglycerol to the sulfhydryl group of the N-terminal cysteine of a prolipoprotein, the first step in the formation of mature lipoproteins. The protein is Phosphatidylglycerol--prolipoprotein diacylglyceryl transferase of Mycoplasmopsis pulmonis (strain UAB CTIP) (Mycoplasma pulmonis).